The chain runs to 396 residues: NASP-related protein sim3 (396 aa).

Positions 1 to 31 (MSSDTKTLENSKGNSATDADTKNPSSSDSRA) are disordered. TPR repeat units follow at residues 32 to 65 (IEQL…SESI) and 89 to 122 (IENS…GSFT). Residues 135-164 (NEENSSIAHPEKESEEKETNEASPASEEDE) are disordered. Basic and acidic residues predominate over residues 143 to 154 (HPEKESEEKETN). One copy of the TPR 3 repeat lies at 199–232 (ADIYDLLGELSLEIENFSQASQDLKTALEWKEKV). A coiled-coil region spans residues 267–329 (CEHVEKAAEI…QKTLDLKHGA (63 aa)). A compositionally biased stretch (basic and acidic residues) spans 284 to 301 (RENEVTDKKGKGKQKAEE). Disordered stretches follow at residues 284-307 (RENE…LTSD) and 334-396 (EAVM…KKKD). A compositionally biased stretch (low complexity) spans 343–353 (SSLLSKDSSSL).

This sequence belongs to the NASP family. As to quaternary structure, interacts with cnp1, hht1, hht2 and hht3; has a preference for CENP-A (cnp1) over histone H3 (hht1/2/3).

The protein localises to the nucleus. Functionally, histone H3 and H3-like CENP-A-specific chaperone. Promotes delivery and incorporation of CENP-A in centromeric chromatin, probably by escorting nascent CENP-A to CENP-A chromatin assembly factors. Required for central core silencing and normal chromosome segregation. The polypeptide is NASP-related protein sim3 (sim3) (Schizosaccharomyces pombe (strain 972 / ATCC 24843) (Fission yeast)).